Consider the following 739-residue polypeptide: Homeobox protein SIX5 (739 aa).

Low complexity-rich tracts occupy residues Met1–Ala24, Gln34–Ala61, and Pro74–Gly83. Disordered stretches follow at residues Met1 to Leu84, Asn251 to Val294, Leu361 to Lys381, and Leu617 to Pro650. Positions Gly201–Ala260 form a DNA-binding region, homeobox. Positions Glu279 to Arg289 are enriched in basic and acidic residues. A compositionally biased stretch (low complexity) spans Leu617–Asn646.

This sequence belongs to the SIX/Sine oculis homeobox family. As to quaternary structure, probably binds DNA dimer. Interacts with EYA3, and probably EYA1 and EYA2. Expressed in adult but not in fetal eyes. Found in corneal epithelium and endothelium, lens epithelium, ciliary body epithelia, cellular layers of the retina and the sclera.

Its subcellular location is the cytoplasm. It localises to the nucleus. Functionally, transcription factor that is thought to be involved in regulation of organogenesis. May be involved in determination and maintenance of retina formation. Binds a 5'-GGTGTCAG-3' motif present in the ARE regulatory element of ATP1A1. Binds a 5'-TCA[AG][AG]TTNC-3' motif present in the MEF3 element in the myogenin promoter, and in the IGFBP5 promoter. Thought to be regulated by association with Dach and Eya proteins, and seems to be coactivated by EYA1, EYA2 and EYA3. This is Homeobox protein SIX5 (SIX5) from Homo sapiens (Human).